The chain runs to 178 residues: Protein 105R (178 aa).

An N-terminal signal peptide occupies residues 1–18 (MYFLFFFLLFLFPVGVKG).

This chain is Protein 105R, found in Pantherophis guttatus (Corn snake).